Here is a 123-residue protein sequence, read N- to C-terminus: Small ribosomal subunit protein uS13 (123 aa).

A disordered region spans residues 95-123; it reads GLPVRGQKTKTNARTRKGPKRAISGKKNK.

It belongs to the universal ribosomal protein uS13 family. As to quaternary structure, part of the 30S ribosomal subunit. Forms a loose heterodimer with protein S19. Forms two bridges to the 50S subunit in the 70S ribosome.

Its function is as follows. Located at the top of the head of the 30S subunit, it contacts several helices of the 16S rRNA. In the 70S ribosome it contacts the 23S rRNA (bridge B1a) and protein L5 of the 50S subunit (bridge B1b), connecting the 2 subunits; these bridges are implicated in subunit movement. Contacts the tRNAs in the A and P-sites. The protein is Small ribosomal subunit protein uS13 of Clostridium novyi (strain NT).